The sequence spans 364 residues: Growth hormone secretagogue receptor type 1 (364 aa).

Residues Met1–Pro40 lie on the Extracellular side of the membrane. N-linked (GlcNAc...) asparagine glycosylation is found at Asn13 and Asn26. A helical membrane pass occupies residues Leu41 to Val66. Residues Val67–Glu72 lie on the Cytoplasmic side of the membrane. A helical transmembrane segment spans residues Leu73–Pro96. Residues Leu97–Leu117 are Extracellular-facing. Cys115 and Cys197 are disulfide-bonded. The chain crosses the membrane as a helical span at residues Phe118–Glu139. Residues Arg140–Val162 are Cytoplasmic-facing. The chain crosses the membrane as a helical span at residues Ile163–Val183. Topologically, residues Glu184–Val211 are extracellular. N-linked (GlcNAc...) asparagine glycosylation occurs at Asn187. Residues Met212–Gly235 form a helical membrane-spanning segment. At Arg236–Leu263 the chain is on the cytoplasmic side. The helical transmembrane segment at Ala264–Ser285 threads the bilayer. The Extracellular portion of the chain corresponds to Lys286 to Cys302. The helical transmembrane segment at Asn303 to Lys326 threads the bilayer. Over Lys327–Thr364 the chain is Cytoplasmic.

Belongs to the G-protein coupled receptor 1 family.

Its subcellular location is the cell membrane. Its function is as follows. Receptor for ghrelin, coupled to G-alpha-11 proteins. Stimulates growth hormone secretion. Also binds other growth hormone releasing peptides (GHRP) (e.g. Met-enkephalin and GHRP-6) as well as non-peptide, low molecular weight secretagogues (e.g. L-692,429, MK-0677, adenosine). The protein is Growth hormone secretagogue receptor type 1 (Ghsr) of Rattus norvegicus (Rat).